The primary structure comprises 359 residues: 3-dehydroquinate synthase (359 aa).

Residues 72-77, 106-110, 130-131, K143, K152, and 170-173 contribute to the NAD(+) site; these read EGEEHK, GVVGD, TT, and TLTT. Residues E185, H248, and H265 each contribute to the Zn(2+) site.

This sequence belongs to the sugar phosphate cyclases superfamily. Dehydroquinate synthase family. Requires Co(2+) as cofactor. It depends on Zn(2+) as a cofactor. NAD(+) is required as a cofactor.

It is found in the cytoplasm. The enzyme catalyses 7-phospho-2-dehydro-3-deoxy-D-arabino-heptonate = 3-dehydroquinate + phosphate. It functions in the pathway metabolic intermediate biosynthesis; chorismate biosynthesis; chorismate from D-erythrose 4-phosphate and phosphoenolpyruvate: step 2/7. In terms of biological role, catalyzes the conversion of 3-deoxy-D-arabino-heptulosonate 7-phosphate (DAHP) to dehydroquinate (DHQ). This Pelobacter propionicus (strain DSM 2379 / NBRC 103807 / OttBd1) protein is 3-dehydroquinate synthase.